Consider the following 601-residue polypeptide: Proteasome-associated ATPase (601 aa).

Over residues 1 to 15 (MSGPRSGSGSGGSTG) the composition is skewed to gly residues. The interval 1-29 (MSGPRSGSGSGGSTGRPGDADSQRSAYEK) is disordered. Basic and acidic residues predominate over residues 18–29 (GDADSQRSAYEK). Residues 19–106 (DADSQRSAYE…LKEEVDRLAQ (88 aa)) are a coiled coil. Residue 289–294 (GCGKTL) coordinates ATP. Positions 600–601 (YL) are docks into pockets in the proteasome alpha-ring.

The protein belongs to the AAA ATPase family. Homohexamer. Assembles into a hexameric ring structure that caps the 20S proteasome core. Strongly interacts with the prokaryotic ubiquitin-like protein Pup through a hydrophobic interface; the interacting region of ARC lies in its N-terminal coiled-coil domain. There is one Pup binding site per ARC hexamer ring. Upon ATP-binding, the C-terminus of ARC interacts with the alpha-rings of the proteasome core, possibly by binding to the intersubunit pockets.

The protein operates within protein degradation; proteasomal Pup-dependent pathway. ATPase which is responsible for recognizing, binding, unfolding and translocation of pupylated proteins into the bacterial 20S proteasome core particle. May be essential for opening the gate of the 20S proteasome via an interaction with its C-terminus, thereby allowing substrate entry and access to the site of proteolysis. Thus, the C-termini of the proteasomal ATPase may function like a 'key in a lock' to induce gate opening and therefore regulate proteolysis. The chain is Proteasome-associated ATPase from Parafrankia sp. (strain EAN1pec).